The sequence spans 390 residues: Glutamyl-tRNA reductase (390 aa).

Substrate-binding positions include 46-49 (TCNR), Ser96, 101-103 (EAQ), and Gln107. The active-site Nucleophile is the Cys47. Residue 176–181 (GAGEMA) coordinates NADP(+).

Belongs to the glutamyl-tRNA reductase family. In terms of assembly, homodimer.

It catalyses the reaction (S)-4-amino-5-oxopentanoate + tRNA(Glu) + NADP(+) = L-glutamyl-tRNA(Glu) + NADPH + H(+). It functions in the pathway porphyrin-containing compound metabolism; protoporphyrin-IX biosynthesis; 5-aminolevulinate from L-glutamyl-tRNA(Glu): step 1/2. In terms of biological role, catalyzes the NADPH-dependent reduction of glutamyl-tRNA(Glu) to glutamate 1-semialdehyde (GSA). The protein is Glutamyl-tRNA reductase of Thermus thermophilus (strain ATCC 27634 / DSM 579 / HB8).